A 434-amino-acid polypeptide reads, in one-letter code: Beta-enolase (434 aa).

Ala-2 is subject to N-acetylalanine. Residue Thr-72 is modified to Phosphothreonine. Phosphoserine is present on residues Ser-83 and Ser-157. Substrate contacts are provided by His-158 and Glu-167. Ser-176 bears the Phosphoserine mark. Thr-205 is subject to Phosphothreonine. The Proton donor role is filled by Glu-210. A Phosphothreonine modification is found at Thr-229. Residue Tyr-236 is modified to Phosphotyrosine. Mg(2+) is bound at residue Asp-245. Ser-263 carries the phosphoserine modification. Glu-293 and Asp-318 together coordinate substrate. Glu-293 and Asp-318 together coordinate Mg(2+). Lys-343 (proton acceptor) is an active-site residue. Substrate is bound by residues 370 to 373 (SHRS) and Lys-394.

Belongs to the enolase family. Mammalian enolase is composed of 3 isozyme subunits, alpha, beta and gamma, which can form homodimers or heterodimers which are cell-type and development-specific. Interacts with PNKD. The cofactor is Mg(2+). The alpha/alpha homodimer is expressed in embryo and in most adult tissues. The alpha/beta heterodimer and the beta/beta homodimer are found in striated muscle, and the alpha/gamma heterodimer and the gamma/gamma homodimer in neurons.

It localises to the cytoplasm. The enzyme catalyses (2R)-2-phosphoglycerate = phosphoenolpyruvate + H2O. It participates in carbohydrate degradation; glycolysis; pyruvate from D-glyceraldehyde 3-phosphate: step 4/5. In terms of biological role, glycolytic enzyme that catalyzes the conversion of 2-phosphoglycerate to phosphoenolpyruvate. Appears to have a function in striated muscle development and regeneration. The protein is Beta-enolase (ENO3) of Oryctolagus cuniculus (Rabbit).